The chain runs to 291 residues: MADLDDIKDGKDFRTDQPQQNIPFTLKGCGALDWGMQSRLSRIFNPKTGNTVMLAFDHGYFQGPTTGLERIDINIAPLFEHADVLMCTRGILRSVVPPATNKPVVLRASGANSILAELSNEAVALSMDDAVRLNSCAVAAQVYIGSEYEHQSIKNIIQLVDAGMKVGMPTMAVTGVGKDMVRDQRYFSLATRIAAEMGAQIIKTYYVEKGFERIVAGCPVPIVIAGGKKLPEREALEMCWQAIDQGASGVDMGRNIFQSDHPVAMMKAVQAVVHHNETADRAYELYLSEKQ.

Lys203 (schiff-base intermediate with substrate) is an active-site residue.

The protein belongs to the DeoC/FbaB aldolase family. Homodecamer.

The protein localises to the cytoplasm. It catalyses the reaction dihydroxyacetone phosphate + acetyl-CoA = 3-hydroxy-2,4-dioxopentyl phosphate + CoA. Involved in the degradation of phospho-AI-2, thereby terminating induction of the lsr operon and closing the AI-2 signaling cycle. Catalyzes the transfer of an acetyl moiety from 3-hydroxy-5-phosphonooxypentane-2,4-dione to CoA to form glycerone phosphate and acetyl-CoA. The polypeptide is 3-hydroxy-5-phosphonooxypentane-2,4-dione thiolase (Escherichia coli O139:H28 (strain E24377A / ETEC)).